Reading from the N-terminus, the 272-residue chain is Shikimate dehydrogenase (NADP(+)) (272 aa).

Shikimate is bound by residues 14 to 16 (SKS) and T61. The active-site Proton acceptor is K65. An NADP(+)-binding site is contributed by E77. Shikimate-binding residues include N86 and D102. Residues 126–130 (GAGGA), 150–155 (NRTFSK), and M213 contribute to the NADP(+) site. Y215 contacts shikimate. Position 237 (G237) interacts with NADP(+).

It belongs to the shikimate dehydrogenase family. As to quaternary structure, homodimer.

It carries out the reaction shikimate + NADP(+) = 3-dehydroshikimate + NADPH + H(+). It participates in metabolic intermediate biosynthesis; chorismate biosynthesis; chorismate from D-erythrose 4-phosphate and phosphoenolpyruvate: step 4/7. Its function is as follows. Involved in the biosynthesis of the chorismate, which leads to the biosynthesis of aromatic amino acids. Catalyzes the reversible NADPH linked reduction of 3-dehydroshikimate (DHSA) to yield shikimate (SA). This is Shikimate dehydrogenase (NADP(+)) from Psychromonas ingrahamii (strain DSM 17664 / CCUG 51855 / 37).